A 292-amino-acid polypeptide reads, in one-letter code: Elongation factor Ts (292 aa).

The segment at Thr80–Val83 is involved in Mg(2+) ion dislocation from EF-Tu.

The protein belongs to the EF-Ts family.

The protein localises to the cytoplasm. Its function is as follows. Associates with the EF-Tu.GDP complex and induces the exchange of GDP to GTP. It remains bound to the aminoacyl-tRNA.EF-Tu.GTP complex up to the GTP hydrolysis stage on the ribosome. The polypeptide is Elongation factor Ts (Ralstonia nicotianae (strain ATCC BAA-1114 / GMI1000) (Ralstonia solanacearum)).